A 173-amino-acid polypeptide reads, in one-letter code: Shikimate kinase 1 (173 aa).

14–19 (GAGKST) contributes to the ATP binding site. Residue Ser18 coordinates Mg(2+). Substrate is bound by residues Asp36, Arg60, and Gly82. Arg120 lines the ATP pocket. Position 140 (Arg140) interacts with substrate. ATP is bound at residue Gln157.

This sequence belongs to the shikimate kinase family. In terms of assembly, monomer. The cofactor is Mg(2+).

It localises to the cytoplasm. The enzyme catalyses shikimate + ATP = 3-phosphoshikimate + ADP + H(+). It participates in metabolic intermediate biosynthesis; chorismate biosynthesis; chorismate from D-erythrose 4-phosphate and phosphoenolpyruvate: step 5/7. Functionally, catalyzes the specific phosphorylation of the 3-hydroxyl group of shikimic acid using ATP as a cosubstrate. The sequence is that of Shikimate kinase 1 from Yersinia pseudotuberculosis serotype O:1b (strain IP 31758).